Here is a 252-residue protein sequence, read N- to C-terminus: Ribosome maturation factor RimP (252 aa).

A disordered region spans residues 188–252 (QGAAPGTEGG…PAAGPGAQDE (65 aa)). A compositionally biased stretch (basic residues) spans 208–224 (ARRPHQPKPKKAKKKGP).

The protein belongs to the RimP family.

Its subcellular location is the cytoplasm. Required for maturation of 30S ribosomal subunits. The protein is Ribosome maturation factor RimP of Rhodospirillum centenum (strain ATCC 51521 / SW).